A 157-amino-acid polypeptide reads, in one-letter code: Ribosome maturation factor RimP (157 aa).

It belongs to the RimP family.

Its subcellular location is the cytoplasm. Functionally, required for maturation of 30S ribosomal subunits. This Geobacillus kaustophilus (strain HTA426) protein is Ribosome maturation factor RimP.